The following is an 86-amino-acid chain: Small ribosomal subunit protein uS17 (86 aa).

It belongs to the universal ribosomal protein uS17 family. As to quaternary structure, part of the 30S ribosomal subunit.

Functionally, one of the primary rRNA binding proteins, it binds specifically to the 5'-end of 16S ribosomal RNA. The protein is Small ribosomal subunit protein uS17 of Streptococcus mutans serotype c (strain ATCC 700610 / UA159).